The chain runs to 380 residues: XK-related protein 9 (380 aa).

Helical transmembrane passes span 10-30 (LLSAAGLVMYVADVCTDAALV), 39-59 (VVCAALTLLFIVVGLLVTQVF), 81-101 (LPVVSKRGLATLHLFGVGIFI), 167-187 (CSLVQLVGMSFSFMNAAWALV), 228-248 (ALLLIFSIYSTVGLAIVWLLG), 264-284 (SLEFLYRAIVGVILTFTFFNV), 294-314 (ITYYFLHSLINVLSLLLLFVL), and 329-349 (TLMAACSVLGLVCLVLYYLLL).

Belongs to the XK family.

It is found in the cell membrane. It catalyses the reaction a 1,2-diacyl-sn-glycero-3-phospho-L-serine(in) = a 1,2-diacyl-sn-glycero-3-phospho-L-serine(out). Functionally, phospholipid scramblase that promotes phosphatidylserine exposure on apoptotic cell surface. Phosphatidylserine is a specific marker only present at the surface of apoptotic cells and acts as a specific signal for engulfment. The chain is XK-related protein 9 from Tetraodon nigroviridis (Spotted green pufferfish).